The chain runs to 505 residues: Maturase K (505 aa).

This sequence belongs to the intron maturase 2 family. MatK subfamily.

It localises to the plastid. It is found in the chloroplast. Its function is as follows. Usually encoded in the trnK tRNA gene intron. Probably assists in splicing its own and other chloroplast group II introns. This Silene otites (Spanish catchfly) protein is Maturase K.